Reading from the N-terminus, the 542-residue chain is Calcium-dependent protein kinase 7 (542 aa).

G2 carries N-myristoyl glycine lipidation. The 259-residue stretch at 79–337 folds into the Protein kinase domain; that stretch reads YIIGRKLGQG…AHEVLRHPWI (259 aa). ATP-binding positions include 85 to 93 and K108; that span reads LGQGQFGTT. Catalysis depends on D203, which acts as the Proton acceptor. The autoinhibitory domain stretch occupies residues 343–373; sequence ATDQALDPSVISRLKQFSAMNKLKKLALRVI. The region spanning 380–415 is the EF-hand 1 domain; sequence EEIAGLREMFKAVDTKNRGVITFGELREGLRRFGAE. Residues D393, E404, D431, N433, T435, E440, D465, D467, S469, Y471, K476, D499, N501, D503, Q505, and E510 each contribute to the Ca(2+) site. In terms of domain architecture, EF-hand 2; degenerate spans 416 to 451; it reads FKDTEIGDIMEAAHNDNNVTIHYEEFIAATLPLNKI. 2 EF-hand domains span residues 452–487 and 488–521; these read EREEHLLAAFTYFDKDGSGYITVDKLQRACGEHNME and DSLLEEIISEVDQNNDGQIDYAEFVAMMQGSNVG.

Belongs to the protein kinase superfamily. Ser/Thr protein kinase family. CDPK subfamily. Expressed in roots. Expressed in leaf sheaths.

It localises to the membrane. It is found in the cytoplasm. Its subcellular location is the cytosol. The enzyme catalyses L-seryl-[protein] + ATP = O-phospho-L-seryl-[protein] + ADP + H(+). The catalysed reaction is L-threonyl-[protein] + ATP = O-phospho-L-threonyl-[protein] + ADP + H(+). Its activity is regulated as follows. Activated by calcium. Autophosphorylation may play an important role in the regulation of the kinase activity. Its function is as follows. May play a role in signal transduction pathways that involve calcium as a second messenger. May be a signaling component in the response to gibberellin and cold stress. This chain is Calcium-dependent protein kinase 7, found in Oryza sativa subsp. japonica (Rice).